Here is a 562-residue protein sequence, read N- to C-terminus: Urease subunit alpha (562 aa).

The 432-residue stretch at 131–562 folds into the Urease domain; that stretch reads GGMDCHIHFI…LPMAQRYFLF (432 aa). Residues H136, H138, and K219 each coordinate Ni(2+). K219 carries the post-translational modification N6-carboxylysine. H221 contacts substrate. Ni(2+) is bound by residues H248 and H274. Residue H322 is the Proton donor of the active site. D362 contributes to the Ni(2+) binding site.

Belongs to the metallo-dependent hydrolases superfamily. Urease alpha subunit family. Heterotrimer of UreA (gamma), UreB (beta) and UreC (alpha) subunits. Three heterotrimers associate to form the active enzyme. The cofactor is Ni cation. Post-translationally, carboxylation allows a single lysine to coordinate two nickel ions.

The protein resides in the cytoplasm. It carries out the reaction urea + 2 H2O + H(+) = hydrogencarbonate + 2 NH4(+). The protein operates within nitrogen metabolism; urea degradation; CO(2) and NH(3) from urea (urease route): step 1/1. This is Urease subunit alpha from Paracoccus denitrificans (strain Pd 1222).